A 716-amino-acid polypeptide reads, in one-letter code: Macrophage-expressed gene 1 protein (716 aa).

The first 20 residues, 1–20 (MNNFRATILFWAVAAWVTSG), serve as a signal peptide directing secretion. An MACPF domain is found at 30-345 (GVQKCKNALK…TAVKRYYTFN (316 aa)). A disulfide bridge connects residues C34 and C70. The next 2 membrane-spanning stretches (beta stranded) occupy residues 113-120 (YSINTELS) and 127-132 (GKFSTE). N-linked (GlcNAc...) asparagine glycans are attached at residues N168 and N185. Transmembrane regions (beta stranded) follow at residues 235–244 (AVTASAGLAF) and 248–256 (VNFKFEENY). N-linked (GlcNAc...) asparagine glycosylation is present at N269. The cysteines at positions 350 and 369 are disulfide-linked. N375 carries an N-linked (GlcNAc...) asparagine glycan. 5 cysteine pairs are disulfide-bonded: C385/C397, C435/C449, C439/C445, C534/C572, and C557/C577. The segment at 413–656 (PSGYSPVRLL…GDGGGLSGGA (244 aa)) is P2. Residues 656-676 (AAAGVTLGVTTILAVVITLAI) form a helical membrane-spanning segment. Positions 693–716 (RQSLVPGTAATGDTTYQEQGQSPA) are disordered. Residues 703–716 (TGDTTYQEQGQSPA) show a composition bias toward polar residues.

It belongs to the MPEG1 family. As to quaternary structure, homooligomer; predominantly forms a homooligomeric arc-shaped pore complex instead of complete rings of 16 subunits. Proteolytically processed in two steps to generate the Macrophage-expressed gene 1 protein, processed form: cleaved by trypsin in proximity of the helical transmembrane domain releases the ectodomain into the lysosomal lumen to orient the pore-forming domain toward the endogenous membranes, and processed by the asparagine endopeptidase (LGMN). Proteolytic processing in antigen-containing vesicles is pH-dependent. In terms of processing, monoubiquitinated in response to bacterial infection; ubiquitination is required for vesicular localization and antibacterial activity and can be blocked by bacterial cell cycle inhibiting factor (cif).

It is found in the cytoplasmic vesicle membrane. The protein localises to the cytoplasmic vesicle. Its subcellular location is the phagosome membrane. Forms arc- and ring-shaped pre-pores on top of the membrane at neutral to slightly acidic pH conditions and converts to pores upon acidification. Undergoes transition from the pre-pore to the pore in a processive clockwise hand-over-hand process. In the pore state, 2 alpha-helical regions refold into transmembrane hairpins (TMH1 and TMH2) in each protomer that form in the ensemble complex giant beta-barrel transmembrane pores. Pore-forming protein involved in both innate and adaptive immunity. Plays a central role in antigen cross-presentation in dendritic cells by forming a pore in antigen-containing compartments, thereby promoting delivery of antigens for cross-presentation. Also involved in innate immune response following bacterial infection; shows antibacterial activity against a wide spectrum of Gram-positive, Gram-negative and acid-fast bacteria. Reduces the viability of the intracytosolic pathogen L.monocytogenes by inhibiting acidification of the phagocytic vacuole of host cells which restricts bacterial translocation from the vacuole to the cytosol. Required for the antibacterial activity of reactive oxygen species and nitric oxide. In terms of biological role, pore-forming protein that plays a central role in antigen cross-presentation in dendritic cells by mediating delivery of antigens for cross-presentation. Dendritic cells bridge innate and adaptive immunity by capturing exogenous antigens on MHC class-I molecules and presenting them to naive CD8(+) T-cells. Acts by forming a pore in antigen-containing compartments, promoting the release of antigens into the cytosol, enabling generation of MHCI:peptide complexes and T-cell priming. The protein is Macrophage-expressed gene 1 protein (MPEG1) of Pongo abelii (Sumatran orangutan).